We begin with the raw amino-acid sequence, 516 residues long: Squalene epoxidase 5 (516 aa).

2 consecutive transmembrane segments (helical) span residues 3 to 23 (FTNV…VFYV) and 45 to 65 (ATDV…YALA). Residues 55 to 56 (VG), 75 to 76 (ER), Arg-83, Phe-88, Arg-156, Val-172, Asp-335, and Met-348 contribute to the FAD site. Residues 446-466 (LIYHLCAITLSSIGHLLSPFP) form a helical membrane-spanning segment.

This sequence belongs to the squalene monooxygenase family. It depends on FAD as a cofactor. In terms of tissue distribution, expressed in seedlings, leaves, stems and inflorescences. Detected in siliques.

Its subcellular location is the membrane. It catalyses the reaction squalene + reduced [NADPH--hemoprotein reductase] + O2 = (S)-2,3-epoxysqualene + oxidized [NADPH--hemoprotein reductase] + H2O + H(+). The protein operates within terpene metabolism; lanosterol biosynthesis; lanosterol from farnesyl diphosphate: step 2/3. In terms of biological role, catalyzes the stereospecific oxidation of squalene to (S)-2,3-epoxysqualene, and is considered to be a rate-limiting enzyme in steroid biosynthesis. The chain is Squalene epoxidase 5 (SQE5) from Arabidopsis thaliana (Mouse-ear cress).